The sequence spans 170 residues: NADPH-dependent 7-cyano-7-deazaguanine reductase (170 aa).

Catalysis depends on Cys-58, which acts as the Thioimide intermediate. The active-site Proton donor is the Asp-65. Residues Val-80–Ser-82 and His-99–Glu-100 each bind substrate.

Belongs to the GTP cyclohydrolase I family. QueF type 1 subfamily.

It is found in the cytoplasm. The enzyme catalyses 7-aminomethyl-7-carbaguanine + 2 NADP(+) = 7-cyano-7-deazaguanine + 2 NADPH + 3 H(+). The protein operates within tRNA modification; tRNA-queuosine biosynthesis. Its function is as follows. Catalyzes the NADPH-dependent reduction of 7-cyano-7-deazaguanine (preQ0) to 7-aminomethyl-7-deazaguanine (preQ1). This Bdellovibrio bacteriovorus (strain ATCC 15356 / DSM 50701 / NCIMB 9529 / HD100) protein is NADPH-dependent 7-cyano-7-deazaguanine reductase.